A 434-amino-acid chain; its full sequence is Enolase (434 aa).

Gln166 is a binding site for (2R)-2-phosphoglycerate. Glu208 acts as the Proton donor in catalysis. Residues Asp245, Glu290, and Asp317 each coordinate Mg(2+). (2R)-2-phosphoglycerate is bound by residues Lys342, Arg371, Ser372, and Lys393. Residue Lys342 is the Proton acceptor of the active site.

This sequence belongs to the enolase family. Mg(2+) is required as a cofactor.

The protein resides in the cytoplasm. The protein localises to the secreted. It is found in the cell surface. The catalysed reaction is (2R)-2-phosphoglycerate = phosphoenolpyruvate + H2O. Its pathway is carbohydrate degradation; glycolysis; pyruvate from D-glyceraldehyde 3-phosphate: step 4/5. Catalyzes the reversible conversion of 2-phosphoglycerate (2-PG) into phosphoenolpyruvate (PEP). It is essential for the degradation of carbohydrates via glycolysis. This chain is Enolase, found in Caldicellulosiruptor bescii (strain ATCC BAA-1888 / DSM 6725 / KCTC 15123 / Z-1320) (Anaerocellum thermophilum).